We begin with the raw amino-acid sequence, 132 residues long: Small ribosomal subunit protein uS8 (132 aa).

This sequence belongs to the universal ribosomal protein uS8 family. In terms of assembly, part of the 30S ribosomal subunit. Contacts proteins S5 and S12.

In terms of biological role, one of the primary rRNA binding proteins, it binds directly to 16S rRNA central domain where it helps coordinate assembly of the platform of the 30S subunit. This chain is Small ribosomal subunit protein uS8, found in Mycobacterium marinum (strain ATCC BAA-535 / M).